An 855-amino-acid polypeptide reads, in one-letter code: Leucine--tRNA ligase (855 aa).

The short motif at 42–52 (PYPSGSLHVGH) is the 'HIGH' region element. The disordered stretch occupies residues 292 to 311 (SEMDRTAEDKPKKGIPTGGK). The segment covering 293–303 (EMDRTAEDKPK) has biased composition (basic and acidic residues). The 'KMSKS' region signature appears at 614–618 (KMSKS). Lysine 617 serves as a coordination point for ATP.

The protein belongs to the class-I aminoacyl-tRNA synthetase family.

Its subcellular location is the cytoplasm. It catalyses the reaction tRNA(Leu) + L-leucine + ATP = L-leucyl-tRNA(Leu) + AMP + diphosphate. The chain is Leucine--tRNA ligase from Acaryochloris marina (strain MBIC 11017).